Here is a 93-residue protein sequence, read N- to C-terminus: Putative pterin-4-alpha-carbinolamine dehydratase (93 aa).

Belongs to the pterin-4-alpha-carbinolamine dehydratase family.

The catalysed reaction is (4aS,6R)-4a-hydroxy-L-erythro-5,6,7,8-tetrahydrobiopterin = (6R)-L-erythro-6,7-dihydrobiopterin + H2O. The chain is Putative pterin-4-alpha-carbinolamine dehydratase from Mycolicibacterium vanbaalenii (strain DSM 7251 / JCM 13017 / BCRC 16820 / KCTC 9966 / NRRL B-24157 / PYR-1) (Mycobacterium vanbaalenii).